A 238-amino-acid polypeptide reads, in one-letter code: Ribonuclease PH (238 aa).

The tract at residues 64–86 is disordered; it reads GMLPRSTGSRMDREAARGKQSGR. Residues arginine 86 and 124–126 contribute to the phosphate site; that span reads GTR.

This sequence belongs to the RNase PH family. In terms of assembly, homohexameric ring arranged as a trimer of dimers.

The enzyme catalyses tRNA(n+1) + phosphate = tRNA(n) + a ribonucleoside 5'-diphosphate. Phosphorolytic 3'-5' exoribonuclease that plays an important role in tRNA 3'-end maturation. Removes nucleotide residues following the 3'-CCA terminus of tRNAs; can also add nucleotides to the ends of RNA molecules by using nucleoside diphosphates as substrates, but this may not be physiologically important. Probably plays a role in initiation of 16S rRNA degradation (leading to ribosome degradation) during starvation. The sequence is that of Ribonuclease PH from Methylobacillus flagellatus (strain ATCC 51484 / DSM 6875 / VKM B-1610 / KT).